A 138-amino-acid chain; its full sequence is Large ribosomal subunit protein uL16 (138 aa).

Basic residues predominate over residues 1–15 (MLSPRKVKYRKKQRG). The segment at 1-21 (MLSPRKVKYRKKQRGRLSGEA) is disordered.

The protein belongs to the universal ribosomal protein uL16 family. As to quaternary structure, part of the 50S ribosomal subunit.

Functionally, binds 23S rRNA and is also seen to make contacts with the A and possibly P site tRNAs. The sequence is that of Large ribosomal subunit protein uL16 from Borrelia duttonii (strain Ly).